The sequence spans 929 residues: Thrombospondin-3b (929 aa).

The N-terminal stretch at M1–S22 is a signal peptide. The 169-residue stretch at E24–G192 folds into the Laminin G-like domain. N45 carries N-linked (GlcNAc...) asparagine glycosylation. 18 cysteine pairs are disulfide-bonded: C277/C288, C282/C299, C319/C343, C349/C362, C356/C371, C374/C386, C392/C406, C400/C416, C418/C429, C445/C452, C457/C477, C493/C513, C516/C536, C552/C572, C575/C595, C613/C633, C653/C673, and C689/C910. The EGF-like 1; calcium-binding domain maps to D345–V384. Residue N381 is glycosylated (N-linked (GlcNAc...) asparagine). The region spanning A388–G430 is the EGF-like 2 domain. TSP type-3 repeat units lie at residues P431–Q465, E466–Q501, Q502–Q524, L525–Q560, T561–Q583, S584–Q621, L622–Q661, and I662–M697. Over residues D602–C613 the composition is skewed to basic and acidic residues. The interval D602–D651 is disordered. Residue N618 is glycosylated (N-linked (GlcNAc...) asparagine). Positions S624 to G641 are enriched in acidic residues. Residues R701 to P915 enclose the TSP C-terminal domain. N911 carries an N-linked (GlcNAc...) asparagine glycan.

Belongs to the thrombospondin family. As to quaternary structure, oligomer; disulfide-linked.

Its function is as follows. Adhesive glycoprotein that mediates cell-to-cell and cell-to-matrix interactions. Can bind to fibrinogen, fibronectin, laminin and type V collagen. The chain is Thrombospondin-3b from Danio rerio (Zebrafish).